The sequence spans 147 residues: Protein-export protein SecB 2 (147 aa).

This sequence belongs to the SecB family. As to quaternary structure, homotetramer, a dimer of dimers. One homotetramer interacts with 1 SecA dimer.

The protein localises to the cytoplasm. Its function is as follows. One of the proteins required for the normal export of preproteins out of the cell cytoplasm. It is a molecular chaperone that binds to a subset of precursor proteins, maintaining them in a translocation-competent state. It also specifically binds to its receptor SecA. In Francisella tularensis subsp. novicida (strain U112), this protein is Protein-export protein SecB 2.